Consider the following 103-residue polypeptide: Small ribosomal subunit protein uS10 (103 aa).

The protein belongs to the universal ribosomal protein uS10 family. As to quaternary structure, part of the 30S ribosomal subunit.

Involved in the binding of tRNA to the ribosomes. The polypeptide is Small ribosomal subunit protein uS10 (Chlorobium luteolum (strain DSM 273 / BCRC 81028 / 2530) (Pelodictyon luteolum)).